Reading from the N-terminus, the 130-residue chain is Small ribosomal subunit protein uS11c (130 aa).

This sequence belongs to the universal ribosomal protein uS11 family. In terms of assembly, part of the 30S ribosomal subunit.

The protein resides in the plastid. The protein localises to the chloroplast. The chain is Small ribosomal subunit protein uS11c from Chlorokybus atmophyticus (Soil alga).